The primary structure comprises 488 residues: Proline--tRNA ligase (488 aa).

Belongs to the class-II aminoacyl-tRNA synthetase family. ProS type 3 subfamily. As to quaternary structure, homodimer.

It is found in the cytoplasm. It carries out the reaction tRNA(Pro) + L-proline + ATP = L-prolyl-tRNA(Pro) + AMP + diphosphate. Its function is as follows. Catalyzes the attachment of proline to tRNA(Pro) in a two-step reaction: proline is first activated by ATP to form Pro-AMP and then transferred to the acceptor end of tRNA(Pro). This chain is Proline--tRNA ligase, found in Borreliella afzelii (strain PKo) (Borrelia afzelii).